A 148-amino-acid polypeptide reads, in one-letter code: UPF0178 protein lpp0103 (148 aa).

The protein belongs to the UPF0178 family.

This Legionella pneumophila (strain Paris) protein is UPF0178 protein lpp0103.